A 344-amino-acid chain; its full sequence is Biotin synthase (344 aa).

The region spanning 40-267 (AEVQVSTLLS…KSMVRLSAGR (228 aa)) is the Radical SAM core domain. [4Fe-4S] cluster is bound by residues C55, C59, and C62. 4 residues coordinate [2Fe-2S] cluster: C99, C130, C190, and R262.

Belongs to the radical SAM superfamily. Biotin synthase family. Homodimer. The cofactor is [4Fe-4S] cluster. It depends on [2Fe-2S] cluster as a cofactor.

It catalyses the reaction (4R,5S)-dethiobiotin + (sulfur carrier)-SH + 2 reduced [2Fe-2S]-[ferredoxin] + 2 S-adenosyl-L-methionine = (sulfur carrier)-H + biotin + 2 5'-deoxyadenosine + 2 L-methionine + 2 oxidized [2Fe-2S]-[ferredoxin]. It participates in cofactor biosynthesis; biotin biosynthesis; biotin from 7,8-diaminononanoate: step 2/2. Its function is as follows. Catalyzes the conversion of dethiobiotin (DTB) to biotin by the insertion of a sulfur atom into dethiobiotin via a radical-based mechanism. The polypeptide is Biotin synthase (Xanthomonas oryzae pv. oryzae (strain PXO99A)).